A 178-amino-acid chain; its full sequence is Ribulose bisphosphate carboxylase small subunit, chloroplastic (178 aa).

The N-terminal 55 residues, 1-55, are a transit peptide targeting the chloroplast; that stretch reads MASSMMVSTAAVSRTSPAQSNMVVPFAGLHSSAAFPVTRKFADSSKLPSNGLRVR.

The protein belongs to the RuBisCO small chain family. In terms of assembly, heterohexadecamer of 8 large and 8 small subunits.

Its subcellular location is the plastid. It is found in the chloroplast. In terms of biological role, ruBisCO catalyzes two reactions: the carboxylation of D-ribulose 1,5-bisphosphate, the primary event in carbon dioxide fixation, as well as the oxidative fragmentation of the pentose substrate. Both reactions occur simultaneously and in competition at the same active site. Although the small subunit is not catalytic it is essential for maximal activity. The polypeptide is Ribulose bisphosphate carboxylase small subunit, chloroplastic (Zantedeschia aethiopica (White calla lily)).